We begin with the raw amino-acid sequence, 273 residues long: Ribosomal RNA small subunit methyltransferase A (273 aa).

Residues asparagine 18, leucine 20, glycine 45, glutamate 66, aspartate 91, and asparagine 113 each contribute to the S-adenosyl-L-methionine site.

The protein belongs to the class I-like SAM-binding methyltransferase superfamily. rRNA adenine N(6)-methyltransferase family. RsmA subfamily.

It localises to the cytoplasm. It carries out the reaction adenosine(1518)/adenosine(1519) in 16S rRNA + 4 S-adenosyl-L-methionine = N(6)-dimethyladenosine(1518)/N(6)-dimethyladenosine(1519) in 16S rRNA + 4 S-adenosyl-L-homocysteine + 4 H(+). Specifically dimethylates two adjacent adenosines (A1518 and A1519) in the loop of a conserved hairpin near the 3'-end of 16S rRNA in the 30S particle. May play a critical role in biogenesis of 30S subunits. The sequence is that of Ribosomal RNA small subunit methyltransferase A from Escherichia coli O1:K1 / APEC.